Reading from the N-terminus, the 56-residue chain is Large ribosomal subunit protein bL33 (56 aa).

Residues Met-1–Leu-12 are compositionally biased toward basic and acidic residues. Positions Met-1–Lys-28 are disordered. A compositionally biased stretch (polar residues) spans Thr-15–Thr-25.

This sequence belongs to the bacterial ribosomal protein bL33 family.

The polypeptide is Large ribosomal subunit protein bL33 (Cupriavidus necator (strain ATCC 17699 / DSM 428 / KCTC 22496 / NCIMB 10442 / H16 / Stanier 337) (Ralstonia eutropha)).